Consider the following 154-residue polypeptide: Large ribosomal subunit protein uL13 (154 aa).

This sequence belongs to the universal ribosomal protein uL13 family. As to quaternary structure, part of the 50S ribosomal subunit.

In terms of biological role, this protein is one of the early assembly proteins of the 50S ribosomal subunit, although it is not seen to bind rRNA by itself. It is important during the early stages of 50S assembly. The chain is Large ribosomal subunit protein uL13 from Brucella anthropi (strain ATCC 49188 / DSM 6882 / CCUG 24695 / JCM 21032 / LMG 3331 / NBRC 15819 / NCTC 12168 / Alc 37) (Ochrobactrum anthropi).